The sequence spans 686 residues: Acyl-CoA synthetase short-chain family member 3, mitochondrial (686 aa).

A mitochondrion-targeting transit peptide spans 1–29 (MKPSWLQCRKVTGAGGLGGSLPASSPARG). Residue 226–229 (EPGR) coordinates CoA. Residues 424–426 (GER) and 445–450 (DHWWQT) contribute to the ATP site. Lysine 517 is subject to N6-succinyllysine. Residue lysine 523 is modified to N6-acetyllysine. ATP contacts are provided by aspartate 538, arginine 553, and arginine 564. Arginine 623 contributes to the CoA binding site.

This sequence belongs to the ATP-dependent AMP-binding enzyme family.

It localises to the mitochondrion matrix. The enzyme catalyses acetate + ATP + CoA = acetyl-CoA + AMP + diphosphate. It catalyses the reaction propanoate + ATP + CoA = propanoyl-CoA + AMP + diphosphate. It carries out the reaction butanoate + ATP + CoA = butanoyl-CoA + AMP + diphosphate. In terms of biological role, catalyzes the synthesis of acetyl-CoA from short-chain fatty acids. Propionate is the preferred substrate but can also utilize acetate and butyrate with a much lower affinity. This Bos taurus (Bovine) protein is Acyl-CoA synthetase short-chain family member 3, mitochondrial (ACSS3).